The chain runs to 549 residues: Cation/acetate symporter ActP (549 aa).

A run of 13 helical transmembrane segments spans residues 33–53 (WQAI…TYWA), 76–96 (GLAI…SALV), 103–123 (GLIY…LIAE), 149–169 (LSAC…MVGA), 183–203 (IAVV…GMLA), 206–226 (WVQI…AFMV), 262–282 (ISAL…PHIL), 303–323 (GFMG…IMLV), 355–375 (LFLG…VAGL), 404–424 (VSKI…ILFE), 428–448 (IAFM…PIIL), 463–483 (IGGW…PTIW), and 493–513 (IFPY…GIWF).

It belongs to the sodium:solute symporter (SSF) (TC 2.A.21) family.

The protein resides in the cell inner membrane. Functionally, transports acetate. The polypeptide is Cation/acetate symporter ActP (Enterobacter sp. (strain 638)).